Consider the following 403-residue polypeptide: 4,4'-dithiodibutanoate disulfide reductase (403 aa).

Gln103 contacts FMN. Catalysis depends on Tyr173, which acts as the Proton donor. 348–349 (AR) contacts FMN.

This sequence belongs to the NADH:flavin oxidoreductase/NADH oxidase family. The cofactor is FMN.

It carries out the reaction 2 4-sulfanylbutanoate + NAD(+) = 4,4'-disulfanyldibutanoate + NADH + H(+). With respect to regulation, inactivated by cobalt, nickel and zinc ions. Involved in the degradation of the organic disulfide 4,4'-dithiodibutyric acid (DTDB). Catalyzes the initial cleavage of DTDB into 2 molecules of 4-mercaptobutyric acid (4MB). Low activities are observed with other disulfide compounds, such as 3,3'-dithiodipropionic acid DTDP, 3,3'-thiodipropionic acid TDP and DTNB. This is 4,4'-dithiodibutanoate disulfide reductase from Rhodococcus erythropolis (Arthrobacter picolinophilus).